A 75-amino-acid polypeptide reads, in one-letter code: Small ribosomal subunit protein eS28 (75 aa).

It belongs to the eukaryotic ribosomal protein eS28 family.

This is Small ribosomal subunit protein eS28 from Natronomonas pharaonis (strain ATCC 35678 / DSM 2160 / CIP 103997 / JCM 8858 / NBRC 14720 / NCIMB 2260 / Gabara) (Halobacterium pharaonis).